An 837-amino-acid chain; its full sequence is MNHLEGSAEVEVTDEAAGGEVNESVEADLEHPEVEEEQQQPPQQQHYVGRHQRGRALEDLRAQLGQEEEERGECLARSASTESGFHNHTDTAEGDVIAAARDGYDAERAQDPEDESAYAVQYRPEAEEYTEQAEAEHAEATHRRALPNHLHFHSLEHEEAMNAAYSGYVYTHRLFHRGEDEPYSEPYADYGGLQEHVYEEIGDAPELDARDGLRLYEQERDEAAAYRQEALGARLHHYDERSDGESDSPEKEAEFAPYPRMDSYEQEEDIDQIVAEVKQSMSSQSLDKAAEDMPEAEQDLERPPTPAGGRPDSPGLQAPAGQQRAVGPAGGGEAGQRYSKEKRDAISLAIKDIKEAIEEVKTRTIRSPYTPDEPKEPIWVMRQDISPTRDCDDQRPMDGDSPSPGSSSPLGAESSSTSLHPSDPVEASTNKESRKSLASFPTYVEVPGPCDPEDLIDGIIFAANYLGSTQLLSDKTPSKNVRMMQAQEAVSRIKMAQKLAKSRKKAPEGESQPMTEVDLFISTQRIKVLNADTQETMMDHPLRTISYIADIGNIVVLMARRRMPRSNSQENVEASHPSQDGKRQYKMICHVFESEDAQLIAQSIGQAFSVAYQEFLRANGINPEDLSQKEYSDLLNTQDMYNDDLIHFSKSENCKDVFIEKQKGEILGVVIVESGWGSILPTVIIANMMHGGPAEKSGKLNIGDQIMSINGTSLVGLPLSTCQSIIKGLKNQSRVKLNIVRCPPVTTVLIRRPDLRYQLGFSVQNGIICSLMRGGIAERGGVRVGHRIIEINGQSVVATPHEKIVHILSNAVGEIHMKTMPAAMYRLLTAQEQPVYI.

Disordered stretches follow at residues 1–93 (MNHL…DTAE), 238–342 (YDER…SKEK), and 358–435 (EEVK…ESRK). Acidic residues predominate over residues 23–38 (ESVEADLEHPEVEEEQ). 7 positions are modified to phosphoserine: S78, S242, S246, S248, S263, S280, and S285. The interval 226–314 (YRQEALGARL…TPAGGRPDSP (89 aa)) is munc-18-1 binding. Residues 238-254 (YDERSDGESDSPEKEAE) are compositionally biased toward basic and acidic residues. A Phosphothreonine modification is found at T305. Residues S313 and S367 each carry the phosphoserine modification. Residue T370 is modified to Phosphothreonine. The LIN-2/CASK binding stretch occupies residues 373–436 (EPKEPIWVMR…ASTNKESRKS (64 aa)). The segment covering 387–398 (PTRDCDDQRPMD) has biased composition (basic and acidic residues). Positions 399 to 418 (GDSPSPGSSSPLGAESSSTS) are enriched in low complexity. Phosphoserine is present on residues S401, S403, S408, and S568. In terms of domain architecture, PID spans 457-643 (DGIIFAANYL…LLNTQDMYND (187 aa)). Residues 626 to 641 (LSQKEYSDLLNTQDMY) are autoinhibitory helix linker. 2 consecutive PDZ domains span residues 656-742 (DVFI…IVRC) and 747-822 (TVLI…TMPA).

In terms of assembly, part of a multimeric complex containing STXBP1 and STX1A. Interacts with STXBP1. Also part of the brain-specific heterotrimeric complex LIN-10/X11-alpha, LIN-2/CASK, and LIN7. Component of the brain-specific heterotrimeric complex (LIN-10-LIN-2-LIN-7 complex) composed of at least APBA1, CASK, and LIN7, which associates with the motor protein KIF17 to transport vesicles along microtubules. Within the complex, interacts (via PDZ domain) with the motor protein KIF17; the interaction is direct and is required for association of KIF17 with the cargo that is to be transported. Both isoform 1 and isoform 2 bind to the cytoplasmic domain of amyloid protein (APP). Interacts (via PDZ 1 and 2 domains) with FSPB. Isoform 2, but not isoform 1, interacts (via its truncated PID domain) with active, GTP-bound RAB6A and RAB6B. As to expression, brain and spinal cord. Isoform 2 is expressed in testis and brain, but not detected in lung, liver or spleen.

It localises to the cytoplasm. It is found in the perinuclear region. The protein resides in the nucleus. Its subcellular location is the golgi apparatus. Its function is as follows. Putative function in synaptic vesicle exocytosis by binding to Munc18-1, an essential component of the synaptic vesicle exocytotic machinery. May modulate processing of the amyloid-beta precursor protein (APP) and hence formation of APP-beta. Component of the LIN-10-LIN-2-LIN-7 complex, which associates with the motor protein KIF17 to transport vesicles containing N-methyl-D-aspartate (NMDA) receptor subunit NR2B along microtubules. The polypeptide is Amyloid-beta A4 precursor protein-binding family A member 1 (APBA1) (Homo sapiens (Human)).